Reading from the N-terminus, the 170-residue chain is Cathelicidin antimicrobial peptide (170 aa).

The first 30 residues, 1 to 30 (MKTQRDSPSLGRWSLVLLLLGLVMPLAIVA), serve as a signal peptide directing secretion. Residues 31–131 (QVLSYQEAVL…DISCDKDNRR (101 aa)) constitute a propeptide, cathelin-like domain (CLD). 2 cysteine pairs are disulfide-bonded: cysteine 86–cysteine 97 and cysteine 108–cysteine 125. Positions 150 to 162 (FKRIVQRIKDFLQ) are active core.

This sequence belongs to the cathelicidin family. As to quaternary structure, monomer, homodimer or homotrimer (in vitro). Oligomerizes as tetra- or hexamer in solution (in vitro). Post-translationally, proteolytically cleaved by proteinase PRTN3 into antibacterial peptide LL-37. Proteolytically cleaved by cathepsin CTSG and neutrophil elastase ELANE. Resistant to proteolytic degradation in solution, and when bound to both zwitterionic (mimicking mammalian membranes) and negatively charged membranes (mimicking bacterial membranes). In terms of processing, after secretion onto the skin surface, the CAMP gene product is processed by a serine protease-dependent mechanism into multiple novel antimicrobial peptides distinct from and shorter than cathelicidin LL-37. These peptides show enhanced antimicrobial action, acquiring the ability to kill skin pathogens such as S.aureus, E.coli and C.albicans. These peptides have lost the ability to stimulate CXCL8/IL8 release from keratinocytes. The peptides act synergistically, killing bacteria at lower concentrations when present together, and maintain activity at increased salt condition.

It is found in the secreted. It localises to the vesicle. Antimicrobial protein that is an integral component of the innate immune system. Binds to bacterial lipopolysaccharides (LPS). Acts via neutrophil N-formyl peptide receptors to enhance the release of CXCL2. Postsecretory processing generates multiple cathelicidin antimicrobial peptides with various lengths which act as a topical antimicrobial defense in sweat on skin. The unprocessed precursor form, cathelicidin antimicrobial peptide, inhibits the growth of Gram-negative E.coli and E.aerogenes with efficiencies comparable to that of the mature peptide LL-37 (in vitro). In terms of biological role, antimicrobial peptide that is an integral component of the innate immune system. Binds to bacterial lipopolysaccharides (LPS). Causes membrane permeabilization by forming transmembrane pores (in vitro). Causes lysis of E.coli. Exhibits antimicrobial activity against Gram-negative bacteria such as P.aeruginosa, S.typhimurium, E.aerogenes, E.coli and P.syringae, Gram-positive bacteria such as L.monocytogenes, S.epidermidis, S.pyogenes and S.aureus, as well as vancomycin-resistant enterococci (in vitro). Exhibits antimicrobial activity against methicillin-resistant S.aureus, P.mirabilis, and C.albicans in low-salt media, but not in media containing 100 mM NaCl (in vitro). Forms chiral supramolecular assemblies with quinolone signal (PQS) molecules of P.aeruginosa, which may lead to interference of bacterial quorum signaling and perturbance of bacterial biofilm formation. May form supramolecular fiber-like assemblies on bacterial membranes. Induces cytokine and chemokine producation as well as TNF/TNFA and CSF2/GMCSF production in normal human keratinocytes. Exhibits hemolytic activity against red blood cells. Its function is as follows. Exhibits antimicrobial activity against E.coli and B.megaterium (in vitro). This is Cathelicidin antimicrobial peptide from Nomascus concolor (Black crested gibbon).